A 143-amino-acid chain; its full sequence is Mediator of RNA polymerase II transcription subunit 10 (143 aa).

A disordered region spans residues 123 to 143 (GAHSNTEISTNPGQKRQGNVS). Over residues 124–143 (AHSNTEISTNPGQKRQGNVS) the composition is skewed to polar residues.

The protein belongs to the Mediator complex subunit 10 family. As to quaternary structure, component of the Mediator complex.

The protein localises to the nucleus. Its function is as follows. Component of the Mediator complex, a coactivator involved in the regulated transcription of nearly all RNA polymerase II-dependent genes. Mediator functions as a bridge to convey information from gene-specific regulatory proteins to the basal RNA polymerase II transcription machinery. Mediator is recruited to promoters by direct interactions with regulatory proteins and serves as a scaffold for the assembly of a functional preinitiation complex with RNA polymerase II and the general transcription factors. In Yarrowia lipolytica (strain CLIB 122 / E 150) (Yeast), this protein is Mediator of RNA polymerase II transcription subunit 10 (NUT2).